We begin with the raw amino-acid sequence, 278 residues long: NAD-dependent protein deacylase (278 aa).

The 249-residue stretch at 22–270 (RSRIFHRDSA…PEYIREFLTT (249 aa)) folds into the Deacetylase sirtuin-type domain. 46-65 (GAGISAESGIRTFRADDGLW) provides a ligand contact to NAD(+). Substrate is bound by residues Y90 and R93. Residue 127–130 (QNID) participates in NAD(+) binding. H145 serves as the catalytic Proton acceptor. The Zn(2+) site is built by C153 and C172. NAD(+) is bound by residues 212–214 (GTS), 238–240 (NLE), and A256.

This sequence belongs to the sirtuin family. Class III subfamily. Zn(2+) is required as a cofactor.

It localises to the cytoplasm. It carries out the reaction N(6)-acetyl-L-lysyl-[protein] + NAD(+) + H2O = 2''-O-acetyl-ADP-D-ribose + nicotinamide + L-lysyl-[protein]. The catalysed reaction is N(6)-succinyl-L-lysyl-[protein] + NAD(+) + H2O = 2''-O-succinyl-ADP-D-ribose + nicotinamide + L-lysyl-[protein]. It catalyses the reaction N(6)-(2-hydroxyisobutanoyl)-L-lysyl-[protein] + NAD(+) + H2O = 2''-O-(2-hydroxyisobutanoyl)-ADP-D-ribose + nicotinamide + L-lysyl-[protein]. In terms of biological role, NAD-dependent lysine deacetylase that specifically removes acetyl groups on target proteins. Also acts as a protein-lysine deacylase by mediating protein desuccinylation and de-2-hydroxyisobutyrylation. Modulates the activities of several proteins which are inactive in their acylated form. The chain is NAD-dependent protein deacylase from Yersinia pestis.